Consider the following 463-residue polypeptide: POU domain, class 2, transcription factor 2 (463 aa).

Disordered regions lie at residues 1 to 87 (MVHS…QPHL), 159 to 182 (QPRA…EEPS), 259 to 282 (SSLP…GRRR), 341 to 376 (PCSA…LSQA), and 393 to 463 (TLHP…PYQP). The span at 12-37 (RMSKPLEAEKQSLDSPSEHTDTERNG) shows a compositional bias: basic and acidic residues. The segment covering 41–60 (NHQNPQNKASPFSVSPTGPS) has biased composition (polar residues). Over residues 75 to 85 (AAPPPPQPAQP) the composition is skewed to pro residues. Positions 179 to 253 (EEPSDLEELE…LLEKWLNDAE (75 aa)) constitute a POU-specific domain. Positions 259 to 272 (SSLPSPNQLSSPSL) are enriched in low complexity. Residues 281–340 (RRKKRTSIETNVRFALEKSFLANQKPTSEEILLIAEQLHMEKEVIRVWFCNRRQKEKRIN) constitute a DNA-binding region (homeobox). A leucine-zipper region spans residues 373–394 (LSQASSSLSTTVTTLSSAVGTL). Over residues 400 to 409 (AGGGGGGGGA) the composition is skewed to gly residues.

The protein belongs to the POU transcription factor family. Class-2 subfamily. In terms of assembly, interacts with NR3C1, AR and PGR. Interacts with POU2AF1; the interaction increases POU2F2 transactivation activity. As to expression, highest in B cells, but also present in brain (neuronal and glial cells), intestine, kidney, and testes. In terms of tissue distribution, expressed at higher levels in B-cells than in neuronal cells. Expressed in neuronal cell lines and brain, but not dorsal root ganglia. As to expression, expressed at lower levels in neuronal cells than in B cells. In terms of tissue distribution, expressed in neuronal cell lines, and at lower levels in neuroblastoma and dorsal root ganglia. Widely expressed in the developing nervous system but expression is confined to very specific regions in the adult brain, it is expressed at a lower level in B cells. As to expression, either absent in, or expressed at very low levels in neuronal cells and brain. In terms of tissue distribution, expressed in all tissues tested: mammary gland, liver, spleen, lung, kidney intestine, uterus and ovary of a virgin mouse. Levels of isoform OCT2.7 are highest in spleen and lung. In mammary gland, expression is localized to the alveolus epithelial cells.

The protein localises to the cytoplasm. It localises to the nucleus. Transactivation activity is enhanced by transcriptional coactivator POU2AF1. Transcription factor that specifically binds to the octamer motif (5'-ATTTGCAT-3'). Regulates IL6 expression in B cells with POU2AF1. Regulates transcription in a number of tissues in addition to activating immunoglobulin gene expression. Modulates transcription transactivation by NR3C1, AR and PGR. Functionally, activates octamer-containing promoters. Its function is as follows. Represses some promoters and activate others. In terms of biological role, represses some promoters and activate others. Activates the U2 small nuclear RNA (snRNA) promoter. Unable to bind to the octamer motif, but can still activate the beta-casein gene promoter at low levels. In Mus musculus (Mouse), this protein is POU domain, class 2, transcription factor 2.